Reading from the N-terminus, the 1720-residue chain is 182 kDa tankyrase-1-binding protein (1720 aa).

The segment at 1 to 137 (MKGSTLREGT…PPLTPPARCA (137 aa)) is disordered. At Ser-14 the chain carries Phosphoserine. The segment covering 117–127 (SGKEDAGKEDL) has biased composition (basic and acidic residues). Thr-131 carries the phosphothreonine modification. A phosphoserine mark is found at Ser-178 and Ser-220. Disordered stretches follow at residues 185 to 472 (SRLT…ESNW) and 485 to 595 (RPSG…EDQE). Residues 209–1563 (EEDSKSPAKG…TEILDSAMYR (1355 aa)) are acidic. Positions 232-243 (QEEHSKTPEERN) are enriched in basic and acidic residues. A Phosphothreonine modification is found at Thr-238. Polar residues predominate over residues 266–287 (VSKTWVTSSADPVSEHGGSTSA). Ser-286 and Ser-300 each carry phosphoserine. Over residues 296–316 (PASESPRLSSRPSSPCHSQLS) the composition is skewed to low complexity. Polar residues predominate over residues 317-327 (ETQSPAASEAS). Phosphoserine is present on residues Ser-429 and Ser-437. A compositionally biased stretch (polar residues) spans 449–459 (TLPQGQGSQSA). Phosphoserine is present on residues Ser-496 and Ser-500. The segment covering 502–518 (ITEASEAAEAAEADSWA) has biased composition (low complexity). Thr-503 and Thr-533 each carry phosphothreonine. A phosphoserine mark is found at Ser-539, Ser-568, Ser-602, Ser-673, Ser-692, and Ser-713. 3 disordered regions span residues 659–720 (TTLP…CSEG), 734–924 (GVAT…EFEK), and 955–1081 (SGGG…GWAG). The span at 742–758 (SSFGSSSWSQDTSQNYS) shows a compositional bias: low complexity. Phosphoserine is present on residues Ser-763, Ser-796, Ser-807, Ser-845, Ser-866, Ser-871, Ser-876, Ser-887, Ser-912, Ser-976, Ser-980, Ser-1006, Ser-1017, and Ser-1022. Residues 840–866 (FGKRESQDPHSIHDKELQDQEFGKRDS) are compositionally biased toward basic and acidic residues. Positions 991–1014 (FEKKTPVGEDRFCEASRDVGHLEE) are enriched in basic and acidic residues. The segment covering 1027–1039 (HSRDGAARPKDEG) has biased composition (basic and acidic residues). Phosphoserine occurs at positions 1047, 1063, 1084, 1096, 1126, 1131, 1171, 1212, 1241, and 1246. Residues 1128-1153 (AGLSPSRKSGGGHFVPPGETKAGAVD) are disordered. Positions 1198-1255 (LARRLGTGESEEPRSLGVGEKDWTSSVEARNRDLPGQAEVGRHSQARESGVGEPDWSG) are disordered. The segment covering 1208–1230 (EEPRSLGVGEKDWTSSVEARNRD) has biased composition (basic and acidic residues). Thr-1275 is subject to Phosphothreonine. A phosphoserine mark is found at Ser-1290, Ser-1321, Ser-1324, Ser-1373, and Ser-1375. A disordered region spans residues 1358 to 1546 (GRVGPDLELD…RGLLPSCPSE (189 aa)). A compositionally biased stretch (polar residues) spans 1402 to 1411 (EDSSSPSFET). Phosphoserine occurs at positions 1425, 1429, 1437, 1440, 1442, 1463, and 1466. Polar residues predominate over residues 1428 to 1457 (ASPSSCLTRSPPSGSQSLLEGIMTASSSKG). The segment at 1440–1532 (SGSQSLLEGI…QNEQASAPPP (93 aa)) is tankyrase-binding. Low complexity predominate over residues 1477–1489 (LAAGAGQGEPQEP). Ser-1496 is modified (phosphoserine). Positions 1515-1527 (WSLTGAARQNEQA) are enriched in polar residues. Phosphoserine is present on Ser-1549. Thr-1554 carries the phosphothreonine modification. The interval 1567–1720 (NLGRKRGHRA…QALKLKKKKI (154 aa)) is disordered. The span at 1568–1577 (LGRKRGHRAP) shows a compositional bias: basic residues. Residues 1593–1606 (SDTRLFQDSTEPRA) show a composition bias toward basic and acidic residues. A phosphoserine mark is found at Ser-1611, Ser-1612, and Ser-1622. The short motif at 1620–1626 (PQSRRTR) is the Nuclear localization signal element. Lys-1635 is modified (N6-methyllysine). Residues Ser-1643 and Ser-1657 each carry the phosphoserine modification. A compositionally biased stretch (basic and acidic residues) spans 1656 to 1670 (RSAEEGEVTESKSSQ). Residues 1671-1690 (KESSVQRSKSCKVPGLGKPL) are compositionally biased toward low complexity. Ser-1706 is subject to Phosphoserine. The Nuclear localization signal motif lies at 1714–1719 (KLKKKK).

As to quaternary structure, binds to the ANK repeat domain of TNKS1 and TNKS2. Post-translationally, ADP-ribosylated by TNKS1.

Its subcellular location is the nucleus. The protein resides in the cytoplasm. It localises to the cytoskeleton. The protein localises to the chromosome. The sequence is that of 182 kDa tankyrase-1-binding protein (Tnks1bp1) from Mus musculus (Mouse).